A 22-amino-acid chain; its full sequence is Caerin-3.5 (22 aa).

Residue Lys22 is modified to Lysine amide.

In terms of tissue distribution, expressed by the skin dorsal glands.

Its subcellular location is the secreted. Shows significant activity against Gram-positive organisms, but is less effective against Gram-negative organisms. This Ranoidea gracilenta (Dainty green tree frog) protein is Caerin-3.5.